A 210-amino-acid chain; its full sequence is High mobility group protein B2 (210 aa).

Lys-3 is subject to N6-acetyllysine. The HMG box 1 DNA-binding region spans 9-79 (PRGKMSSYAF…RYDREMKNYV (71 aa)). Cys-23 is modified (cysteine sulfonic acid (-SO3H); alternate). Cysteines 23 and 45 form a disulfide. N6-acetyllysine is present on Lys-30. Ser-35 carries the post-translational modification Phosphoserine. The residue at position 43 (Lys-43) is an N6-acetyllysine. Residue Cys-45 is modified to Cysteine sulfonic acid (-SO3H); alternate. Basic and acidic residues predominate over residues 51 to 76 (TMSAKEKSKFEDLAKSDKARYDREMK). Residues 51–102 (TMSAKEKSKFEDLAKSDKARYDREMKNYVPPKGDKKGKKKDPNAPKRPPSAF) form a disordered region. Lys-90 carries the post-translational modification N6-acetyllysine. Positions 95–163 (PKRPPSAFFL…KYEKDIAAYR (69 aa)) form a DNA-binding region, HMG box 2. Position 100 is a phosphoserine (Ser-100). Position 106 is a cysteine sulfonic acid (-SO3H) (Cys-106). 2 positions are modified to N6-acetyllysine: Lys-114 and Lys-141. Over residues 162–172 (YRAKGKSEVGK) the composition is skewed to basic and acidic residues. Residues 162–210 (YRAKGKSEVGKKGPGRPTGSKKKNEPEDEEEEEEEEDDEDEEEEDEDEE) form a disordered region. Residues 165-180 (KGKSEVGKKGPGRPTG) are required for chemotactic activity. Acidic residues predominate over residues 187–210 (PEDEEEEEEEEDDEDEEEEDEDEE).

The protein belongs to the HMGB family. In terms of assembly, interacts with POU2F2, POU2F1 and POU3F1. Component of the RAG complex composed of core components RAG1 and RAG2, and associated component HMGB1 or HMGB2. Component of the SET complex, composed of at least ANP32A, APEX1, HMGB2, NME1, SET and TREX1. Directly interacts with SET. Interacts with LEF1. In terms of processing, reduction/oxidation of cysteine residues Cys-23, Cys-45 and Cys-106 and a possible intramolecular disulfide bond involving Cys-23 and Cys-45 give rise to different redox forms with specific functional activities in various cellular compartments: 1- fully reduced HMGB2 (HMGB2C23hC45hC106h), 2- disulfide HMGB2 (HMGB2C23-C45C106h) and 3- sulfonyl HMGB2 (HMGB2C23soC45soC106so).

It localises to the nucleus. The protein localises to the chromosome. Its subcellular location is the cytoplasm. It is found in the secreted. Functionally, multifunctional protein with various roles in different cellular compartments. May act in a redox sensitive manner. In the nucleus is an abundant chromatin-associated non-histone protein involved in transcription, chromatin remodeling and V(D)J recombination and probably other processes. Binds DNA with a preference to non-canonical DNA structures such as single-stranded DNA. Can bent DNA and enhance DNA flexibility by looping thus providing a mechanism to promote activities on various gene promoters by enhancing transcription factor binding and/or bringing distant regulatory sequences into close proximity. Involved in V(D)J recombination by acting as a cofactor of the RAG complex: acts by stimulating cleavage and RAG protein binding at the 23 bp spacer of conserved recombination signal sequences (RSS). Proposed to be involved in the innate immune response to nucleic acids by acting as a cytoplasmic promiscuous immunogenic DNA/RNA sensor which cooperates with subsequent discriminative sensing by specific pattern recognition receptors. In the extracellular compartment acts as a chemokine. Promotes proliferation and migration of endothelial cells implicating AGER/RAGE. Has antimicrobial activity in gastrointestinal epithelial tissues. Involved in inflammatory response to antigenic stimulus coupled with pro-inflammatory activity. May play a role in germ cell differentiation. Involved in modulation of neurogenesis probably by regulation of neural stem proliferation. Involved in articular cartilage surface maintenance implicating LEF1 and the Wnt/beta-catenin pathway. This is High mobility group protein B2 (Hmgb2) from Rattus norvegicus (Rat).